Reading from the N-terminus, the 133-residue chain is Large-conductance mechanosensitive channel (133 aa).

Helical transmembrane passes span 10-30 (FAVK…GAFG) and 76-96 (GAFI…FSMV).

The protein belongs to the MscL family. Homopentamer.

It localises to the cell inner membrane. Channel that opens in response to stretch forces in the membrane lipid bilayer. May participate in the regulation of osmotic pressure changes within the cell. This is Large-conductance mechanosensitive channel from Haemophilus ducreyi (strain 35000HP / ATCC 700724).